The following is a 159-amino-acid chain: Cyclic pyranopterin monophosphate synthase (159 aa).

Residues 75 to 77 (LCH) and 113 to 114 (ME) each bind substrate. Aspartate 128 is a catalytic residue.

This sequence belongs to the MoaC family. As to quaternary structure, homohexamer; trimer of dimers.

The enzyme catalyses (8S)-3',8-cyclo-7,8-dihydroguanosine 5'-triphosphate = cyclic pyranopterin phosphate + diphosphate. The protein operates within cofactor biosynthesis; molybdopterin biosynthesis. Catalyzes the conversion of (8S)-3',8-cyclo-7,8-dihydroguanosine 5'-triphosphate to cyclic pyranopterin monophosphate (cPMP). The chain is Cyclic pyranopterin monophosphate synthase from Serratia proteamaculans (strain 568).